A 188-amino-acid chain; its full sequence is Protein GrpE (188 aa).

Residues 1-24 are disordered; the sequence is MSDENKPGEAAELDAGVAPEAQPE.

Belongs to the GrpE family. Homodimer.

The protein resides in the cytoplasm. Its function is as follows. Participates actively in the response to hyperosmotic and heat shock by preventing the aggregation of stress-denatured proteins, in association with DnaK and GrpE. It is the nucleotide exchange factor for DnaK and may function as a thermosensor. Unfolded proteins bind initially to DnaJ; upon interaction with the DnaJ-bound protein, DnaK hydrolyzes its bound ATP, resulting in the formation of a stable complex. GrpE releases ADP from DnaK; ATP binding to DnaK triggers the release of the substrate protein, thus completing the reaction cycle. Several rounds of ATP-dependent interactions between DnaJ, DnaK and GrpE are required for fully efficient folding. In Hyphomonas neptunium (strain ATCC 15444), this protein is Protein GrpE.